The chain runs to 370 residues: MTARNLFLLPGDGIGPEAMGEVRKIIAYMNEAMDAGFVTDEGLVGGCAYDAHGAAISEADMQKALAADAVLFGAVGGPKWDSVPYEVRPEAGLLRLRKDLQLFANLRPAICYPALASASSLKPELVEGLDILIIRELTGGVYFGEPKEIIDLGNGQKRGIDTQVYDTYEIERIAGVAFEMARTRQNRVCSMEKRNVMKSGVLWNQVVTETHKAKYSDVQLEHMLADAGGMQLVRQPKQFDVIVTDNLFGDMLSDVAAMLTGSLGMLPSASLGAPDGKTGKRKALYEPVHGSAPDIAGKGIANPIAMIASFAMCLRYSFNMVKEADDLEKAIANVLDKGIRTGDIMADGCRQVGTVEMGEAILAEFKALSA.

Position 77 to 90 (77 to 90 (GPKWDSVPYEVRPE)) interacts with NAD(+). 4 residues coordinate substrate: R97, R107, R135, and D226. The Mg(2+) site is built by D226, D250, and D254. 290-302 (GSAPDIAGKGIAN) contributes to the NAD(+) binding site.

This sequence belongs to the isocitrate and isopropylmalate dehydrogenases family. LeuB type 1 subfamily. As to quaternary structure, homodimer. Mg(2+) is required as a cofactor. The cofactor is Mn(2+).

It localises to the cytoplasm. It carries out the reaction (2R,3S)-3-isopropylmalate + NAD(+) = 4-methyl-2-oxopentanoate + CO2 + NADH. It participates in amino-acid biosynthesis; L-leucine biosynthesis; L-leucine from 3-methyl-2-oxobutanoate: step 3/4. Catalyzes the oxidation of 3-carboxy-2-hydroxy-4-methylpentanoate (3-isopropylmalate) to 3-carboxy-4-methyl-2-oxopentanoate. The product decarboxylates to 4-methyl-2 oxopentanoate. This chain is 3-isopropylmalate dehydrogenase, found in Rhizobium etli (strain ATCC 51251 / DSM 11541 / JCM 21823 / NBRC 15573 / CFN 42).